Reading from the N-terminus, the 131-residue chain is UPF0146 protein PYRAB01940 (131 aa).

This sequence belongs to the UPF0146 family.

In Pyrococcus abyssi (strain GE5 / Orsay), this protein is UPF0146 protein PYRAB01940.